The following is a 181-amino-acid chain: Ribosome-recycling factor (181 aa).

The segment at 131–154 (RRDAMDSVKKEKEMPEDDVRKAEN) is disordered.

It belongs to the RRF family.

It is found in the cytoplasm. Its function is as follows. Responsible for the release of ribosomes from messenger RNA at the termination of protein biosynthesis. May increase the efficiency of translation by recycling ribosomes from one round of translation to another. The protein is Ribosome-recycling factor of Leuconostoc citreum (strain KM20).